A 303-amino-acid polypeptide reads, in one-letter code: Coenzyme PQQ synthesis protein B (303 aa).

The protein belongs to the PqqB family.

It participates in cofactor biosynthesis; pyrroloquinoline quinone biosynthesis. In terms of biological role, may be involved in the transport of PQQ or its precursor to the periplasm. This Pseudomonas putida (strain GB-1) protein is Coenzyme PQQ synthesis protein B.